Reading from the N-terminus, the 254-residue chain is 5'-nucleotidase SurE (254 aa).

A divalent metal cation is bound by residues Asp-8, Asp-9, Ser-39, and Asn-91.

It belongs to the SurE nucleotidase family. It depends on a divalent metal cation as a cofactor.

It localises to the cytoplasm. It carries out the reaction a ribonucleoside 5'-phosphate + H2O = a ribonucleoside + phosphate. Its function is as follows. Nucleotidase that shows phosphatase activity on nucleoside 5'-monophosphates. This Methylibium petroleiphilum (strain ATCC BAA-1232 / LMG 22953 / PM1) protein is 5'-nucleotidase SurE.